Consider the following 258-residue polypeptide: Imidazole glycerol phosphate synthase subunit HisF (258 aa).

Catalysis depends on residues Asp-11 and Asp-130.

It belongs to the HisA/HisF family. In terms of assembly, heterodimer of HisH and HisF.

It localises to the cytoplasm. The enzyme catalyses 5-[(5-phospho-1-deoxy-D-ribulos-1-ylimino)methylamino]-1-(5-phospho-beta-D-ribosyl)imidazole-4-carboxamide + L-glutamine = D-erythro-1-(imidazol-4-yl)glycerol 3-phosphate + 5-amino-1-(5-phospho-beta-D-ribosyl)imidazole-4-carboxamide + L-glutamate + H(+). It functions in the pathway amino-acid biosynthesis; L-histidine biosynthesis; L-histidine from 5-phospho-alpha-D-ribose 1-diphosphate: step 5/9. IGPS catalyzes the conversion of PRFAR and glutamine to IGP, AICAR and glutamate. The HisF subunit catalyzes the cyclization activity that produces IGP and AICAR from PRFAR using the ammonia provided by the HisH subunit. The protein is Imidazole glycerol phosphate synthase subunit HisF of Sodalis glossinidius (strain morsitans).